A 127-amino-acid polypeptide reads, in one-letter code: Putative 2Fe-2S ferredoxin (127 aa).

The [2Fe-2S] cluster site is built by cysteine 23, cysteine 54, and cysteine 58.

The protein belongs to the 2Fe2S Shethna-type ferredoxin family. The cofactor is [2Fe-2S] cluster.

Functionally, ferredoxins are iron-sulfur proteins that transfer electrons in a wide variety of metabolic reactions. In Priestia megaterium (Bacillus megaterium), this protein is Putative 2Fe-2S ferredoxin (cbiW).